A 505-amino-acid chain; its full sequence is Lysine--tRNA ligase, heat inducible (505 aa).

2 positions are modified to N6-acetyllysine: lysine 114 and lysine 156. Mg(2+)-binding residues include glutamate 415 and glutamate 422.

Belongs to the class-II aminoacyl-tRNA synthetase family. As to quaternary structure, homodimer. It depends on Mg(2+) as a cofactor.

The protein resides in the cytoplasm. The catalysed reaction is tRNA(Lys) + L-lysine + ATP = L-lysyl-tRNA(Lys) + AMP + diphosphate. This Escherichia coli O157:H7 protein is Lysine--tRNA ligase, heat inducible (lysU).